Reading from the N-terminus, the 62-residue chain is Large ribosomal subunit protein bL33 (62 aa).

The protein belongs to the bacterial ribosomal protein bL33 family.

The protein is Large ribosomal subunit protein bL33 of Azobacteroides pseudotrichonymphae genomovar. CFP2.